The following is a 204-amino-acid chain: Holliday junction branch migration complex subunit RuvA (204 aa).

The domain I stretch occupies residues 1–64; it reads MIGKLKGTID…EDQLKLFGFM (64 aa). The segment at 65–143 is domain II; it reads TALEREWFNL…AFAGEAINIG (79 aa). Residues 144-151 form a flexible linker region; that stretch reads LKQELGEG. Positions 152-204 are domain III; sequence VAAAPVADAVSALTNLGYSRDQAANAIAAAMKTAGEGADSAKLIRLGLKELAR.

It belongs to the RuvA family. Homotetramer. Forms an RuvA(8)-RuvB(12)-Holliday junction (HJ) complex. HJ DNA is sandwiched between 2 RuvA tetramers; dsDNA enters through RuvA and exits via RuvB. An RuvB hexamer assembles on each DNA strand where it exits the tetramer. Each RuvB hexamer is contacted by two RuvA subunits (via domain III) on 2 adjacent RuvB subunits; this complex drives branch migration. In the full resolvosome a probable DNA-RuvA(4)-RuvB(12)-RuvC(2) complex forms which resolves the HJ.

The protein localises to the cytoplasm. The RuvA-RuvB-RuvC complex processes Holliday junction (HJ) DNA during genetic recombination and DNA repair, while the RuvA-RuvB complex plays an important role in the rescue of blocked DNA replication forks via replication fork reversal (RFR). RuvA specifically binds to HJ cruciform DNA, conferring on it an open structure. The RuvB hexamer acts as an ATP-dependent pump, pulling dsDNA into and through the RuvAB complex. HJ branch migration allows RuvC to scan DNA until it finds its consensus sequence, where it cleaves and resolves the cruciform DNA. In Rhizobium johnstonii (strain DSM 114642 / LMG 32736 / 3841) (Rhizobium leguminosarum bv. viciae), this protein is Holliday junction branch migration complex subunit RuvA.